Consider the following 78-residue polypeptide: Small ribosomal subunit protein uS19m (78 aa).

The protein belongs to the universal ribosomal protein uS19 family.

Its subcellular location is the mitochondrion. This Acanthamoeba castellanii (Amoeba) protein is Small ribosomal subunit protein uS19m (RPS19).